Reading from the N-terminus, the 530-residue chain is Purine-cytosine permease FCY22 (530 aa).

The residue at position 46 (threonine 46) is a Phosphothreonine. 12 helical membrane-spanning segments follow: residues 96–116, 119–139, 162–182, 197–217, 220–240, 263–283, 298–318, 345–365, 372–392, 396–416, 418–438, and 463–483; these read MVIV…LNFG, VLVI…FSLF, FFSL…ISVS, CPIW…TFFG, VVHA…LVII, GVLS…TYAA, IFFS…ILGA, AILV…LLAL, VPGM…LAKI, VWTM…TYYF, GFME…IAIA, and LPIG…VALG.

This sequence belongs to the purine-cytosine permease (2.A.39) family.

The protein localises to the membrane. Its function is as follows. Probable purine-cytosine permease. This Saccharomyces cerevisiae (strain ATCC 204508 / S288c) (Baker's yeast) protein is Purine-cytosine permease FCY22 (FCY22).